We begin with the raw amino-acid sequence, 728 residues long: Probable 3',5'-cyclic phosphodiesterase pde-5 (728 aa).

A GAF domain is found at S214–R371. The PDEase domain occupies C390–Q709. The active-site Proton donor is the H465. The a divalent metal cation site is built by H469, H503, D504, and D614. The stretch at M691 to E728 forms a coiled coil. Positions E708–E728 are disordered. Positions L716–E728 are enriched in polar residues.

The protein belongs to the cyclic nucleotide phosphodiesterase family. The cofactor is a divalent metal cation.

The catalysed reaction is a nucleoside 3',5'-cyclic phosphate + H2O = a nucleoside 5'-phosphate + H(+). In terms of biological role, redundantly with pde-1, plays a role in the AFD thermosensory neurons to regulate microvilli receptive ending morphology, possibly by regulating cGMP levels. The chain is Probable 3',5'-cyclic phosphodiesterase pde-5 (pde-5) from Caenorhabditis elegans.